The primary structure comprises 122 residues: Heat-labile enterotoxin IIB, B chain (122 aa).

An N-terminal signal peptide occupies residues 1–23 (MSFKKIIKAFVIMAALVSVQAHA). Cys33 and Cys104 are joined by a disulfide.

As to quaternary structure, heterohexamer of one A chain and of five B chains.

The biological activity of the toxin is produced by the A chain, which activates intracellular adenyl cyclase. This chain is Heat-labile enterotoxin IIB, B chain, found in Escherichia coli.